Here is a 31-residue protein sequence, read N- to C-terminus: Cytochrome b6-f complex subunit 6 (31 aa).

A helical membrane pass occupies residues 4-24; that stretch reads ITSYFGFLLAALTITSAIFIG.

This sequence belongs to the PetL family. In terms of assembly, the 4 large subunits of the cytochrome b6-f complex are cytochrome b6, subunit IV (17 kDa polypeptide, PetD), cytochrome f and the Rieske protein, while the 4 small subunits are PetG, PetL, PetM and PetN. The complex functions as a dimer.

The protein localises to the plastid. The protein resides in the chloroplast thylakoid membrane. Functionally, component of the cytochrome b6-f complex, which mediates electron transfer between photosystem II (PSII) and photosystem I (PSI), cyclic electron flow around PSI, and state transitions. PetL is important for photoautotrophic growth as well as for electron transfer efficiency and stability of the cytochrome b6-f complex. This chain is Cytochrome b6-f complex subunit 6, found in Ficus carica (Common fig).